We begin with the raw amino-acid sequence, 303 residues long: MTHMSIFLSRDNKVIVQGITGSEATVHTARMLRAGTQIVGGVNARKAGTTVTHEDKGGRLIKLPVFGSVAEAMEKTGADVSIIFVPPTFAKDAIIEAIDAEIPLLVVITEGIPVQDTAYAWAYNLEAGHKTRIIGPNCPGIISPGQSLAGITPANITGPGPIGLVSKSGTLTYQMMFELRDLGFSTAIGIGGDPVIGTTHIDAIEAFERDPDTKLIVMIGEIGGDAEERAADFIKTNVSKPVVGYVAGFTAPEGKTMGHAGAIVSGSSGTAAAKQEALEAAGVKVGKTPSATAALAREILLSL.

CoA is bound by residues 20-23, Lys46, and 108-110; these read TGSE and ITE. Tyr173 contacts substrate. His259 acts as the Tele-phosphohistidine intermediate in catalysis.

This sequence belongs to the succinate/malate CoA ligase alpha subunit family. Heterotetramer of two alpha and two beta subunits.

It catalyses the reaction succinate + ATP + CoA = succinyl-CoA + ADP + phosphate. The catalysed reaction is GTP + succinate + CoA = succinyl-CoA + GDP + phosphate. The protein operates within carbohydrate metabolism; tricarboxylic acid cycle; succinate from succinyl-CoA (ligase route): step 1/1. In terms of biological role, succinyl-CoA synthetase functions in the citric acid cycle (TCA), coupling the hydrolysis of succinyl-CoA to the synthesis of either ATP or GTP and thus represents the only step of substrate-level phosphorylation in the TCA. The alpha subunit of the enzyme binds the substrates coenzyme A and phosphate, while succinate binding and nucleotide specificity is provided by the beta subunit. This is Succinate--CoA ligase [ADP-forming] subunit alpha from Mycobacterium tuberculosis (strain CDC 1551 / Oshkosh).